A 159-amino-acid polypeptide reads, in one-letter code: Probable inactive acireductone dioxygenase 1 (159 aa).

Belongs to the acireductone dioxygenase (ARD) family.

It is found in the cytoplasm. It localises to the nucleus. In terms of biological role, probable inactive acireductone dioxygenase. This Caenorhabditis elegans protein is Probable inactive acireductone dioxygenase 1.